The sequence spans 1486 residues: Chromosome partition protein MukB (1486 aa).

34–41 (GGNGAGKS) is an ATP binding site. Coiled-coil stretches lie at residues 326 to 418 (LEAD…QYNQ), 444 to 480 (LETF…QAYQ), and 509 to 603 (RHLA…RAPV). Residues 666 to 783 (PGGSEDQRLN…EVPLFGRAAR (118 aa)) are flexible hinge. 3 coiled-coil regions span residues 835-923 (EAEI…AKLE), 977-1115 (EMLS…TAKA), and 1209-1266 (VEAI…QNVS).

The protein belongs to the SMC family. MukB subfamily. Homodimerization via its hinge domain. Binds to DNA via its C-terminal region. Interacts, and probably forms a ternary complex, with MukE and MukF via its C-terminal region. The complex formation is stimulated by calcium or magnesium. Interacts with tubulin-related protein FtsZ.

The protein localises to the cytoplasm. Its subcellular location is the nucleoid. Plays a central role in chromosome condensation, segregation and cell cycle progression. Functions as a homodimer, which is essential for chromosome partition. Involved in negative DNA supercoiling in vivo, and by this means organize and compact chromosomes. May achieve or facilitate chromosome segregation by condensation DNA from both sides of a centrally located replisome during cell division. This chain is Chromosome partition protein MukB, found in Escherichia coli (strain K12 / MC4100 / BW2952).